Reading from the N-terminus, the 1016-residue chain is Mastermind-like protein 1 (1016 aa).

Residues 1–123 (MVLPTCPMAE…NLDSATSPQN (123 aa)) form a required for interaction with NOTCH proteins region. Phosphoserine is present on S45. Disordered regions lie at residues 65-184 (QAKA…LGLD), 263-487 (PDED…PSHV), 561-617 (KPKP…SQQQ), 658-681 (EKQQ…QGSF), and 796-953 (AYGQ…GGRA). A compositionally biased stretch (basic residues) spans 67 to 76 (KAKRAGKHRQ). A compositionally biased stretch (basic and acidic residues) spans 93-115 (DAADGPEHGRPATHLHDTVKRNL). Over residues 116 to 129 (DSATSPQNGDQQNG) the composition is skewed to polar residues. S120 is subject to Phosphoserine. Basic and acidic residues predominate over residues 263 to 282 (PDEDMKDLFNEDFEEKKDPE). Polar residues predominate over residues 283 to 292 (SSGSATQTPL). Phosphoserine is present on residues S303 and S314. Positions 322–353 (AGQTFLGPSSAPVSTDSPSLGGSQTLFHTSGQ) are enriched in polar residues. S360 carries the post-translational modification Phosphoserine. The segment covering 392-403 (ELSSAHQLQQIA) has biased composition (polar residues). Positions 413–426 (QNPQQATPAPAPGQ) are enriched in low complexity. Polar residues-rich tracts occupy residues 427-439 (MSTW…SHSS), 451-463 (SPSS…TNSK), 577-595 (QEQN…SVGT), and 602-617 (VASS…SQQQ). The span at 801-810 (SLGSSGLSQQ) shows a compositional bias: low complexity. K822 is subject to N6-acetyllysine. Residues 834–885 (GQNSSWQHQGMPNLSGQTPGNSNVSPFTAASSFHMQQQAHLKMSSPQFSQAV) are compositionally biased toward polar residues. At S1015 the chain carries Phosphoserine.

The protein belongs to the mastermind family. Interacts (via N-terminus) with NOTCH1, NOTCH2, NOTCH3 and NOTCH4 (via ankyrin repeat region). Interacts (via N-terminus) with p53 (via DNA-binding region). Forms a DNA-binding complex with Notch proteins and RBPSUH/RBP-J kappa/CBF1. Also binds CREBBP/CBP and CDK8. Forms a complex with PRAG1, NOTCH1 and MAML1, in a MAML1-dependent manner. As to expression, widely expressed with highest levels in heart, pancreas, peripheral blood leukocytes and spleen.

The protein resides in the nucleus speckle. Functionally, acts as a transcriptional coactivator for NOTCH proteins. Has been shown to amplify NOTCH-induced transcription of HES1. Enhances phosphorylation and proteolytic turnover of the NOTCH intracellular domain in the nucleus through interaction with CDK8. Binds to CREBBP/CBP which promotes nucleosome acetylation at NOTCH enhancers and activates transcription. Induces phosphorylation and localization of CREBBP to nuclear foci. Plays a role in hematopoietic development by regulating NOTCH-mediated lymphoid cell fate decisions. In Homo sapiens (Human), this protein is Mastermind-like protein 1.